A 930-amino-acid chain; its full sequence is F-box only protein 11 (930 aa).

A disordered region spans residues 1–150; sequence MNSVRAANRR…RVSGKSQDLS (150 aa). The span at 7–16 shows a compositional bias: basic residues; the sequence is ANRRPRRVSR. Positions 17–27 are enriched in low complexity; that stretch reads PRPVQQQQQQP. Positions 28–73 are enriched in pro residues; sequence PQQPPPQPPQQQPPPQPPQQPPQQQPPPPPQQQPPPPPPPPPPPPQ. Residues 117 to 132 show a composition bias toward polar residues; the sequence is PTKSSMEGASTSTTEN. The F-box domain maps to 156–202; it reads QYLQEKLPDEVVLKIFSYLLEQDLCRAACVCKRFSELANDPILWKRL. PbH1 repeat units lie at residues 398–420, 421–443, 444–466, 467–489, 490–512, 513–535, 536–558, 559–581, 582–604, 605–627, 628–650, 651–673, 674–696, 697–719, 720–742, 743–765, 766–788, 789–811, and 812–833; these read GACP…YITD, HAQG…WVKN, HGNP…FTFD, HGMG…EVKA, YANP…YVHE, KGRG…WITS, NSDP…YIFG, DGRG…QIRT, NSCP…YVHE, KGQG…WVTT, GSTP…YFYD, NGHG…QIRT, GSNP…LVYN, SGLG…WIKT, DSNP…CIFN, GGRG…LIST, NSHP…EITN, HATA…FLAS, and GVNV…EKAV. The segment at 836 to 907 adopts a UBR-type zinc-finger fold; it reads GQCLYKISSY…LSNPCTLAGE (72 aa).

Component of the SCF(FBXO11) complex consisting of CUL1, RBX1, SKP1 and FBXO11. Interacts with CIITA. At 9.5 dpc and 10.5 dpc, expression is restricted to developing heart tissue. By 11.5 dpc and 12.5 dpc, detected in liver and subsequently in muscle by 13.5 dpc. At 14.5 dpc, still detected in heart, liver and muscle and also in the developing secondary palate including the nasal, medial and oral epithelia of the palatal shelves. At 15.5 dpc and 16.5 dpc, expressed in lung, kidney, heart, liver, muscle and adrenal gland. At this time, fusion of the palate shelves has occurred, with expression confined to the nasal and oral epithelia. At 17.5 dpc, expression in the lung is confined to bronchial epithelial cells and is evident in bone marrow, skin, tissue macrophages, osteoblasts, kidney, liver and spleen. At 18.5 dpc, expressed in bone marrow, liver, kidney and muscle but decreases in heart and lung. At this time, first detected in the middle ear epithelium. At the newborn stage, expression is strong in the middle ear where it is confined to mucin-secreting cells, as well as persisting in bone marrow, kidney and liver. Middle ear expression persists in postnatal head tissue at 4 and 13 days after birth and has declined by 21 days after birth. In the adult, expression is seen in alveolar macrophages of the lung, glomeruli and collecting tubules of the kidney, midbrain, heart and muscle.

It localises to the nucleus. The protein localises to the chromosome. It functions in the pathway protein modification; protein ubiquitination. Its function is as follows. Substrate recognition component of a SCF (SKP1-CUL1-F-box protein) E3 ubiquitin-protein ligase complex which mediates the ubiquitination and subsequent proteasomal degradation of target proteins, such as DTL/CDT2, BCL6, SNAI1 and PRDM1/BLIMP1. The SCF(FBXO11) complex mediates ubiquitination and degradation of BCL6, thereby playing a role in the germinal center B-cells terminal differentiation toward memory B-cells and plasma cells. The SCF(FBXO11) complex also mediates ubiquitination and degradation of DTL, an important step for the regulation of TGF-beta signaling, cell migration and the timing of the cell-cycle progression and exit. The SCF(FBXO11) complex also catalyzes ubiquitination and degradation of GSK3B-phosphorylated SNAI1. Binds to and neddylates phosphorylated p53/TP53, inhibiting its transcriptional activity. Plays a role in the regulatiom of erythropoiesis but not myelopoiesis or megakaryopoiesis. Mechanistically, activates erythroid genes by mediating the degradation of BAHD1, a heterochromatin-associated protein that recruits corepressors to H3K27me3 marks. Participates in macrophage cell death and inflammation in response to bacterial toxins by regulating the expression of complement 5a receptor 1/C5AR1 and IL-1beta. Acts as a critical regulator to determine the level of MHC-II by mediating the recognition of degron at the P/S/T domain of CIITA leading to its ubiquitination and subsequent degradation via the proteasome. Participates in the antiviral repsonse by initiating the activation of TBK1-IRF3-IFN-I axis. Mediates the 'Lys-63'-linked ubiquitination of TRAF3 to strengthen the interaction between TRAF3 and TBK1. In Mus musculus (Mouse), this protein is F-box only protein 11.